We begin with the raw amino-acid sequence, 416 residues long: E3 ubiquitin-protein ligase RNFT1 (416 aa).

Residues 27-45 show a composition bias toward polar residues; it reads QSSSGHTHHQPGSNDSPSV. Disordered stretches follow at residues 27–50 and 63–116; these read QSSSGHTHHQPGSNDSPSVCMSLP and GDVT…ADSR. Residues 77 to 86 show a composition bias toward basic residues; it reads GARSSSRRVR. Helical transmembrane passes span 146 to 166, 184 to 204, 214 to 234, 237 to 257, 265 to 287, and 302 to 322; these read LVVQHITGISVGIGLLTTFLY, LQCLWILVFLLFSSLLLYYTF, VFMNPSLGPLHFFDALWVVGI, FIGKFFFMGLKCIILLVPSFV, YWYMALEEVAQCYCMLVSTPVWF, and WHFGILLALLYLILKLLIIFG. A required for ubiquitin ligase activity and for protection against ER stress-induced cell death region spans residues 349–400; that stretch reads CSEVDGMCAICQAEFIKPIVLVCQHVFCEECISLWFNKEKTCPLCRTVISNQ. The RING-type zinc-finger motif lies at 356 to 394; the sequence is CAICQAEFIKPIVLVCQHVFCEECISLWFNKEKTCPLCR.

It is found in the endoplasmic reticulum membrane. The catalysed reaction is S-ubiquitinyl-[E2 ubiquitin-conjugating enzyme]-L-cysteine + [acceptor protein]-L-lysine = [E2 ubiquitin-conjugating enzyme]-L-cysteine + N(6)-ubiquitinyl-[acceptor protein]-L-lysine.. Its pathway is protein modification; protein ubiquitination. E3 ubiquitin-protein ligase that acts in the endoplasmic reticulum (ER)-associated degradation (ERAD) pathway, which targets misfolded proteins that accumulate in the endoplasmic reticulum (ER) for ubiquitination and subsequent proteasome-mediated degradation. Protects cells from ER stress-induced apoptosis. This Xenopus tropicalis (Western clawed frog) protein is E3 ubiquitin-protein ligase RNFT1 (rnft1).